The primary structure comprises 381 residues: MATVFRPLERLRVPRPSLHPGVTGSGSACCRCTLGAKRYLLTDNIVKLKEFQHKKIAIAYNLPGTKEIYFRNLEEKLTQNKLILKEELKTLLYLCQSLEDVQLAKAVIYRYHAENKNFTLGEYKFGPVFMRLCYELDLEDSAVELVRDKHLQGFFLDSTSFNILMDMLFTKGKYERALQVLIEMKNQDVRFSKETYILAFAICYKLNTLESLKICTTLREEALIKGDIICRRAYCFVVALALNKNQLKNAVSIFSQIVNPESIVCINLNILIHIQSNMLESLLKILEDSLDTNLSKFVRRHTFSEEVLAKVREKLKDSPALIARFDEVYGKLHVNGQITVHSLDALLCHVPRDKRSNLLLLKKRAVSHRTLQPLSRSLLTE.

The stretch at 159 to 193 is one PPR repeat; sequence TSFNILMDMLFTKGKYERALQVLIEMKNQDVRFSK. Position 375 is a phosphoserine (Ser-375).

This sequence belongs to the PTCD2 family. In terms of tissue distribution, high expression in heart and liver and low expression in kidney, brain and testis.

Its subcellular location is the mitochondrion. Functionally, involved in mitochondrial RNA maturation and mitochondrial respiratory chain function. The chain is Pentatricopeptide repeat-containing protein 2, mitochondrial (Ptcd2) from Mus musculus (Mouse).